A 389-amino-acid polypeptide reads, in one-letter code: Radial spoke head protein 3 homolog B (389 aa).

The tract at residues 63 to 106 is disordered; it reads PTGQVPGQPDPLELQRQQQARRRALARKRAQEQLKPRTPEPVEG. The span at 81 to 90 shows a compositional bias: basic residues; sequence QARRRALARK. Residues 91–106 show a composition bias toward basic and acidic residues; that stretch reads RAQEQLKPRTPEPVEG. A Phosphothreonine; by MAPK1 modification is found at Thr143. Residues 206–242 adopt a coiled-coil conformation; that stretch reads YEEIRNVELAEVQRLEEQERRHREEKERRKKQQWEIV. Residues 332-389 are disordered; that stretch reads EAMPPGQKTNVINGPNTVTDPSVTTLHTQKPVLDRVSSQPAPSQERKPVEEGGHLMAE. The segment covering 338 to 359 has biased composition (polar residues); it reads QKTNVINGPNTVTDPSVTTLHT. Residues 375–389 show a composition bias toward basic and acidic residues; that stretch reads QERKPVEEGGHLMAE.

Belongs to the flagellar radial spoke RSP3 family. In terms of assembly, component of the axonemal radial spoke 1 (RS1) and 2 (RS2) complexes, at least composed of spoke head proteins RSPH1, RSPH3B, RSPH9 and the cilia-specific component RSPH4A or sperm-specific component RSPH6A, spoke stalk proteins RSPH14, DNAJB13, DYDC1, ROPN1L and NME5, and the RS1 complex-specific anchor protein IQUB. Interacts with IQUB. Interacts with phosphorylated MAPK1. Interacts with MEK1. Interacts with PKA regulatory subunits PRKAR1A and PRKAR1B. Interacts with RSPH1. Interacts with RSPH4A. Interacts with RSPH6A. Interacts with RSPH9. Interacts with LRRC23. As to expression, expressed in ependymal cells (at protein level).

It localises to the cytoplasm. The protein localises to the cytoskeleton. The protein resides in the cilium axoneme. It is found in the flagellum axoneme. Its function is as follows. Functions as part of axonemal radial spoke complexes that play an important part in the motility of sperm and cilia. Functions as a protein kinase A-anchoring protein that scaffolds the cAMP-dependent protein kinase holoenzyme. May serve as a point of convergence for MAPK and PKA signaling in cilia. This chain is Radial spoke head protein 3 homolog B (Rsph3b), found in Mus musculus (Mouse).